A 392-amino-acid polypeptide reads, in one-letter code: Ribosomal RNA large subunit methyltransferase G (392 aa).

It belongs to the methyltransferase superfamily. RlmG family.

The protein localises to the cytoplasm. It carries out the reaction guanosine(1835) in 23S rRNA + S-adenosyl-L-methionine = N(2)-methylguanosine(1835) in 23S rRNA + S-adenosyl-L-homocysteine + H(+). In terms of biological role, specifically methylates the guanine in position 1835 (m2G1835) of 23S rRNA. The polypeptide is Ribosomal RNA large subunit methyltransferase G (Colwellia psychrerythraea (strain 34H / ATCC BAA-681) (Vibrio psychroerythus)).